The following is a 277-amino-acid chain: Probable enoyl-CoA hydratase, mitochondrial (277 aa).

Residues M1–P42 constitute a mitochondrion transit peptide. Substrate contacts are provided by residues A85–K88 and G128.

This sequence belongs to the enoyl-CoA hydratase/isomerase family. In terms of assembly, homohexamer; dimer of trimers.

The protein resides in the mitochondrion matrix. The catalysed reaction is a (3S)-3-hydroxyacyl-CoA = a (2E)-enoyl-CoA + H2O. It carries out the reaction a 4-saturated-(3S)-3-hydroxyacyl-CoA = a (3E)-enoyl-CoA + H2O. It catalyses the reaction (3S)-3-hydroxybutanoyl-CoA = (2E)-butenoyl-CoA + H2O. The enzyme catalyses 3-hydroxyisovaleryl-CoA = 3-methylbut-2-enoyl-CoA + H2O. The catalysed reaction is 3-hydroxypropanoyl-CoA = acryloyl-CoA + H2O. It carries out the reaction 3-hydroxybutanoyl-CoA = (2E)-butenoyl-CoA + H2O. The protein operates within lipid metabolism; fatty acid beta-oxidation. Functionally, straight-chain enoyl-CoA thioesters from C4 up to at least C16 are processed, although with decreasing catalytic rate. The sequence is that of Probable enoyl-CoA hydratase, mitochondrial (echs1) from Dictyostelium discoideum (Social amoeba).